Consider the following 634-residue polypeptide: Replication protein E1 (634 aa).

The short motif at 84–86 (KRK) is the Nuclear localization signal element. S90 is subject to Phosphoserine; by host. Positions 91 to 115 (QNSPLQDITNQSNSQQSTDEVNNLQ) are enriched in polar residues. A disordered region spans residues 91–128 (QNSPLQDITNQSNSQQSTDEVNNLQAKRRAVDSVPDSG). Residues 172 to 338 (AQASSVTKIC…QTQLEHSFED (167 aa)) are DNA-binding region. Residues 437–587 (VNFIYFLQVL…FPFDSNGNPV (151 aa)) form the SF3 helicase domain. 463–470 (GPPNTGKS) contacts ATP.

It belongs to the papillomaviridae E1 protein family. In terms of assembly, can form hexamers. Interacts with E2 protein; this interaction increases E1 DNA binding specificity. Interacts with host DNA polymerase subunit POLA2. Interacts with host single stranded DNA-binding protein RPA1. Interacts with host TOP1; this interaction stimulates the enzymatic activity of TOP1. Phosphorylated.

It localises to the host nucleus. The enzyme catalyses Couples ATP hydrolysis with the unwinding of duplex DNA by translocating in the 3'-5' direction.. It catalyses the reaction ATP + H2O = ADP + phosphate + H(+). In terms of biological role, ATP-dependent DNA 3'-5' helicase required for initiation of viral DNA replication. It forms a complex with the viral E2 protein. The E1-E2 complex binds to the replication origin which contains binding sites for both proteins. During the initial step, a dimer of E1 interacts with a dimer of protein E2 leading to a complex that binds the viral origin of replication with high specificity. Then, a second dimer of E1 displaces the E2 dimer in an ATP-dependent manner to form the E1 tetramer. Following this, two E1 monomers are added to each half of the site, which results in the formation of two E1 trimers on the viral ori. Subsequently, two hexamers will be created. The double hexamer acts as a bi-directional helicase machinery and unwinds the viral DNA and then recruits the host DNA polymerase to start replication. This chain is Replication protein E1, found in Human papillomavirus 69.